Here is a 172-residue protein sequence, read N- to C-terminus: Transcriptional repressor NrdR (172 aa).

A zinc finger lies at 3-34 (CPFCGAPDTRVIDSRLAGEGDQVRRRRECLSC). The region spanning 49-139 (PRVVKRDGSR…VYLSFADVQA (91 aa)) is the ATP-cone domain.

This sequence belongs to the NrdR family. Zn(2+) serves as cofactor.

Negatively regulates transcription of bacterial ribonucleotide reductase nrd genes and operons by binding to NrdR-boxes. This is Transcriptional repressor NrdR from Thioalkalivibrio sulfidiphilus (strain HL-EbGR7).